Reading from the N-terminus, the 447-residue chain is Elongation factor 1-alpha (447 aa).

The 226-residue stretch at 5 to 230 folds into the tr-type G domain; sequence KIHISIVVIG…DQINEPKRPS (226 aa). The tract at residues 14–21 is G1; sequence GHVDSGKS. Position 14–21 (14–21) interacts with GTP; that stretch reads GHVDSGKS. An N6,N6-dimethyllysine modification is found at lysine 55. Residues 70-74 form a G2 region; sequence GITID. Lysine 79 carries the N6,N6,N6-trimethyllysine modification. A G3 region spans residues 91 to 94; that stretch reads DAPG. GTP is bound by residues 91-95 and 153-156; these read DAPGH and NKMD. The interval 153-156 is G4; it reads NKMD. At lysine 187 the chain carries N6,N6,N6-trimethyllysine. The tract at residues 194-196 is G5; sequence SGF. Lysine 261 carries the post-translational modification N6-methyllysine. The residue at position 289 (glutamate 289) is a 5-glutamyl glycerylphosphorylethanolamine. An N6,N6,N6-trimethyllysine modification is found at lysine 306. A 5-glutamyl glycerylphosphorylethanolamine modification is found at glutamate 362. Lysine 396 is subject to N6,N6,N6-trimethyllysine.

The protein belongs to the TRAFAC class translation factor GTPase superfamily. Classic translation factor GTPase family. EF-Tu/EF-1A subfamily.

Its subcellular location is the cytoplasm. Functionally, this protein promotes the GTP-dependent binding of aminoacyl-tRNA to the A-site of ribosomes during protein biosynthesis. This is Elongation factor 1-alpha (BLT63) from Hordeum vulgare (Barley).